Consider the following 892-residue polypeptide: Translation initiation factor IF-2 (892 aa).

Disordered stretches follow at residues Q144–E176 and S189–H298. Residues L207–P219 are compositionally biased toward low complexity. Residues P391 to K560 enclose the tr-type G domain. Residues G400 to T407, D446 to H450, and S500 to D503 contribute to the GTP site.

This sequence belongs to the TRAFAC class translation factor GTPase superfamily. Classic translation factor GTPase family. IF-2 subfamily.

Its subcellular location is the cytoplasm. Functionally, one of the essential components for the initiation of protein synthesis. Protects formylmethionyl-tRNA from spontaneous hydrolysis and promotes its binding to the 30S ribosomal subunits. Also involved in the hydrolysis of GTP during the formation of the 70S ribosomal complex. This is Translation initiation factor IF-2 from Xylella fastidiosa (strain M12).